We begin with the raw amino-acid sequence, 401 residues long: uncharacterized protein (401 aa).

This sequence belongs to the herpesviridae BTRF1 family.

This is an uncharacterized protein from Connochaetes taurinus (Blue wildebeest).